A 144-amino-acid chain; its full sequence is Probable disulfide formation protein (144 aa).

Residues 10 to 29 (WNLLLLTWLVALISTLSALF) form a helical membrane-spanning segment. A disulfide bond links Cys-39 and Cys-42. Transmembrane regions (helical) follow at residues 44–63 (FQRA…CYRS) and 70–87 (YALP…VHTL). The cysteines at positions 100 and 107 are disulfide-linked. A helical membrane pass occupies residues 116–138 (GVVPLPALALFAFIIIAILLIII).

The protein belongs to the DsbB family. BdbC subfamily.

Its subcellular location is the cell inner membrane. Functionally, required for disulfide bond formation in some proteins. This chain is Probable disulfide formation protein, found in Metapseudomonas resinovorans (Pseudomonas resinovorans).